The chain runs to 123 residues: uncharacterized protein (123 aa).

Positions 89-123 (GVGGRKLGSEGQSLSENSEQRSLMRWGCGGSSERR) are disordered. Polar residues predominate over residues 98 to 109 (EGQSLSENSEQR).

This is an uncharacterized protein from Encephalitozoon cuniculi (strain GB-M1) (Microsporidian parasite).